The chain runs to 468 residues: Tyramine receptor tyra-2 (468 aa).

Topologically, residues 1–23 (MMSSYVMSPVDETYTLFQILKGS) are extracellular. A helical transmembrane segment spans residues 24–43 (ALFLLVLWTIFANSLVFIVL). The Cytoplasmic segment spans residues 44-54 (YKNPRLQTVPN). A helical membrane pass occupies residues 55 to 77 (LLVGNLAFSDLALGLIVLPLSSV). Topologically, residues 78 to 91 (YAIAGEWVFPDALC) are extracellular. Cysteine 91 and cysteine 177 are disulfide-bonded. A helical transmembrane segment spans residues 92 to 114 (EVFVSADILCSTASIWNLSIVGL). The Cytoplasmic portion of the chain corresponds to 115–134 (DRYWAITSPVAYMSKRNKRT). The helical transmembrane segment at 135-157 (AGIMILSVWISSALISLAPLLGW) threads the bilayer. The Extracellular segment spans residues 158-186 (KQTAQTPNLIYEKNNTVRQCTFLDLPSYT). An N-linked (GlcNAc...) asparagine glycan is attached at asparagine 171. Residues 187–209 (VYSATGSFFIPTLLMFFVYFKIY) traverse the membrane as a helical segment. At 210-387 (QAFAKHRARQ…SAAKERRGVK (178 aa)) the chain is on the cytoplasmic side. The disordered stretch occupies residues 252-306 (DEFAKEEEEEEDSESSGQVENGLGNGNDAIIEEDECEDEDSDEKRDDHTSMTTVT). Acidic residues-rich tracts occupy residues 255–265 (AKEEEEEEDSE) and 281–292 (IIEEDECEDEDS). The helical transmembrane segment at 388 to 410 (VLGIILGCFTVCWAPFFTMYVLV) threads the bilayer. At 411-424 (QFCKDCSPNAHIEM) the chain is on the extracellular side. The helical transmembrane segment at 425–444 (FITWLGYSNSAMNPIIYTVF) threads the bilayer. At 445–468 (NRDYQIALKRLFTSEKKPSSTSRV) the chain is on the cytoplasmic side.

Belongs to the G-protein coupled receptor 1 family. As to expression, expressed in the pharyngeal neurons, MCL/R and NSML/R and the AS group of amphidial sensory neurons, ASEL/R, AGSL/R, ASHL/R and ASIL/R.

The protein localises to the cell membrane. In terms of biological role, G-protein coupled receptor for tyramine, a known neurotransmitter and neuromodulator and direct precursor of octopamine. Expression in amphidial sensory neurons suggests a role in chemosensation. This chain is Tyramine receptor tyra-2 (tyra-2), found in Caenorhabditis elegans.